Here is a 1293-residue protein sequence, read N- to C-terminus: DNA repair protein complementing XP-C cells homolog (1293 aa).

Disordered stretches follow at residues M1–K199, E217–T239, Q255–G341, D514–L640, and L658–K919. Residues D18–E30 show a composition bias toward basic and acidic residues. A phosphoserine mark is found at S31, S32, and S37. Residues S31–Q43 are compositionally biased toward acidic residues. Residues S51 to G60 show a composition bias toward low complexity. Polar residues-rich tracts occupy residues F101–R130 and R226–A238. A compositionally biased stretch (basic residues) spans S288–T301. Over residues D313 to E335 the composition is skewed to acidic residues. Residues L520 to P578 are compositionally biased toward basic and acidic residues. 2 positions are modified to phosphoserine: S533 and S537. A compositionally biased stretch (low complexity) spans S580–T594. Residues V598–S612 are compositionally biased toward basic and acidic residues. The span at L658–K692 shows a compositional bias: low complexity. A compositionally biased stretch (basic and acidic residues) spans S693–V711. A compositionally biased stretch (polar residues) spans K720–S737. Basic and acidic residues predominate over residues H806–S818. Residues S908 and S911 each carry the phosphoserine modification. 3 short sequence motifs (nuclear localization signal) span residues K922–R938, K1195–K1211, and K1275–Y1291.

Belongs to the XPC family. Heterodimer.

Its subcellular location is the nucleus. Involved in DNA excision repair. May play a part in DNA damage recognition and/or in altering chromatin structure to allow access by damage-processing enzymes. Its function is as follows. Involved in nucleotide excision repair of DNA damaged with UV light, bulky adducts, or cross-linking agents. This chain is DNA repair protein complementing XP-C cells homolog, found in Drosophila melanogaster (Fruit fly).